The chain runs to 226 residues: Probable proteasome subunit beta type-7 (226 aa).

The protein belongs to the peptidase T1B family. In terms of assembly, the 26S proteasome consists of a 20S proteasome core and two 19S regulatory subunits. The 20S proteasome core is composed of 28 subunits that are arranged in four stacked rings, resulting in a barrel-shaped structure. The two end rings are each formed by seven alpha subunits, and the two central rings are each formed by seven beta subunits. The catalytic chamber with the active sites is on the inside of the barrel.

The protein localises to the cytoplasm. It localises to the nucleus. In terms of biological role, non-catalytic component of the proteasome which degrades poly-ubiquitinated proteins in the cytoplasm and in the nucleus. It is essential for the regulated turnover of proteins and for the removal of misfolded proteins. The proteasome is a multicatalytic proteinase complex that is characterized by its ability to cleave peptides with Arg, Phe, Tyr, Leu, and Glu adjacent to the leaving group at neutral or slightly basic pH. It has an ATP-dependent proteolytic activity. In Encephalitozoon cuniculi (strain GB-M1) (Microsporidian parasite), this protein is Probable proteasome subunit beta type-7 (PRE4).